An 83-amino-acid polypeptide reads, in one-letter code: Large ribosomal subunit protein bL27 (83 aa).

Positions Met-1–Val-25 are disordered.

Belongs to the bacterial ribosomal protein bL27 family.

This Chlamydia muridarum (strain MoPn / Nigg) protein is Large ribosomal subunit protein bL27.